The primary structure comprises 312 residues: D-alanine--D-alanine ligase (312 aa).

One can recognise an ATP-grasp domain in the interval 108-308 (KLVWQQTGIP…YSELVVKVLS (201 aa)). Position 138 to 193 (138 to 193 (AAKLGVPLFVKPASEGSSVAVEKVKSADALPAALEEAAKHDKIVIVEKSIEGGGEY)) interacts with ATP. Residues D262, E275, and N277 each coordinate Mg(2+).

It belongs to the D-alanine--D-alanine ligase family. The cofactor is Mg(2+). Mn(2+) serves as cofactor.

The protein localises to the cytoplasm. The enzyme catalyses 2 D-alanine + ATP = D-alanyl-D-alanine + ADP + phosphate + H(+). The protein operates within cell wall biogenesis; peptidoglycan biosynthesis. Functionally, cell wall formation. This is D-alanine--D-alanine ligase from Burkholderia pseudomallei (strain 668).